The sequence spans 160 residues: Cytochrome b6-f complex subunit 4 (160 aa).

A run of 3 helical transmembrane segments spans residues 36 to 56 (LLYI…GLAV), 95 to 115 (LLGV…PFLE), and 131 to 151 (TIFL…ALPI).

The protein belongs to the cytochrome b family. PetD subfamily. In terms of assembly, the 4 large subunits of the cytochrome b6-f complex are cytochrome b6, subunit IV (17 kDa polypeptide, petD), cytochrome f and the Rieske protein, while the 4 small subunits are petG, petL, petM and petN. The complex functions as a dimer.

It localises to the plastid. It is found in the chloroplast thylakoid membrane. Its function is as follows. Component of the cytochrome b6-f complex, which mediates electron transfer between photosystem II (PSII) and photosystem I (PSI), cyclic electron flow around PSI, and state transitions. This chain is Cytochrome b6-f complex subunit 4, found in Anthoceros angustus (Hornwort).